A 122-amino-acid polypeptide reads, in one-letter code: NADPH-dependent 7-cyano-7-deazaguanine reductase (122 aa).

Cysteine 34 (thioimide intermediate) is an active-site residue. Catalysis depends on aspartate 41, which acts as the Proton donor. Substrate is bound by residues 56–58 and 75–76; these read VEL and HE.

Belongs to the GTP cyclohydrolase I family. QueF type 1 subfamily.

The protein resides in the cytoplasm. The catalysed reaction is 7-aminomethyl-7-carbaguanine + 2 NADP(+) = 7-cyano-7-deazaguanine + 2 NADPH + 3 H(+). It functions in the pathway tRNA modification; tRNA-queuosine biosynthesis. Its function is as follows. Catalyzes the NADPH-dependent reduction of 7-cyano-7-deazaguanine (preQ0) to 7-aminomethyl-7-deazaguanine (preQ1). The protein is NADPH-dependent 7-cyano-7-deazaguanine reductase of Anaeromyxobacter dehalogenans (strain 2CP-C).